The chain runs to 465 residues: Serine/threonine-protein kinase 38 (465 aa).

At Ala2 the chain carries N-acetylalanine. The interaction with S100B stretch occupies residues 62-87 (KRLRRSAHARKETEFLRLKRTRLGLE). Thr74 carries the phosphothreonine modification. In terms of domain architecture, Protein kinase spans 89–382 (FESLKVIGRG…VEEIKSNSFF (294 aa)). ATP-binding positions include 95–103 (IGRGAFGEV) and Lys118. Asp212 serves as the catalytic Proton acceptor. Position 264 is a phosphoserine (Ser264). Position 281 is a phosphoserine; by autocatalysis (Ser281). A UFM1-interacting motif (UFIM) motif is present at residues 306-311 (WSLGVI). Residues 383–455 (EGVDWEHIRE…KRFEGLTARG (73 aa)) form the AGC-kinase C-terminal domain. The residue at position 444 (Thr444) is a Phosphothreonine; by STK24/MST3.

Belongs to the protein kinase superfamily. AGC Ser/Thr protein kinase family. In terms of assembly, homodimeric S100B binds two molecules of STK38. Interacts with MOB1 and MOB2. Interacts with MAP3K1 and MAP3K2 (via the kinase catalytic domain). Forms a tripartite complex with MOBKL1B and STK3/MST2. Interacts with MICAL1; leading to inhibit the protein kinase activity by antagonizing activation by MST1/STK4. The cofactor is Mg(2+). In terms of processing, ISGylated. Post-translationally, phosphorylated by STK3/MST2 and this is enhanced by MOBKL1B. In terms of tissue distribution, ubiquitously expressed with highest levels observed in peripheral blood leukocytes.

It localises to the nucleus. Its subcellular location is the cytoplasm. It is found in the chromosome. The enzyme catalyses L-seryl-[protein] + ATP = O-phospho-L-seryl-[protein] + ADP + H(+). It catalyses the reaction L-threonyl-[protein] + ATP = O-phospho-L-threonyl-[protein] + ADP + H(+). With respect to regulation, activated by binding of S100B which releases autoinhibitory N-lobe interactions, enabling ATP to bind and the autophosphorylation of Ser-281. Thr-444 then undergoes calcium-dependent phosphorylation by STK24/MST3. Interactions between phosphorylated Thr-444 and the N-lobe promote additional structural changes that complete the activation of the kinase. Autoinhibition is also released by the binding of MOB1/MOBKL1A and MOB2/HCCA2 to the N-terminal of STK38. Serine/threonine-protein kinase that acts as a negative regulator of MAP3K1/2 signaling. Converts MAP3K2 from its phosphorylated form to its non-phosphorylated form and inhibits autophosphorylation of MAP3K2. Acts as an ufmylation 'reader' in a kinase-independent manner: specifically recognizes and binds mono-ufmylated histone H4 in response to DNA damage, promoting the recruitment of SUV39H1 to the double-strand breaks, resulting in ATM activation. The protein is Serine/threonine-protein kinase 38 of Homo sapiens (Human).